We begin with the raw amino-acid sequence, 323 residues long: Porphobilinogen deaminase (323 aa).

C240 is modified (S-(dipyrrolylmethanemethyl)cysteine).

Belongs to the HMBS family. As to quaternary structure, monomer. It depends on dipyrromethane as a cofactor.

It carries out the reaction 4 porphobilinogen + H2O = hydroxymethylbilane + 4 NH4(+). Its pathway is porphyrin-containing compound metabolism; protoporphyrin-IX biosynthesis; coproporphyrinogen-III from 5-aminolevulinate: step 2/4. Tetrapolymerization of the monopyrrole PBG into the hydroxymethylbilane pre-uroporphyrinogen in several discrete steps. The protein is Porphobilinogen deaminase of Sulfurovum sp. (strain NBC37-1).